Consider the following 257-residue polypeptide: tRNA uridine(34) hydroxylase (257 aa).

The 95-residue stretch at 128–222 folds into the Rhodanese domain; it reads NGRRLVMLDA…YFEQVGGEGY (95 aa). The active-site Cysteine persulfide intermediate is Cys182.

This sequence belongs to the TrhO family.

The enzyme catalyses uridine(34) in tRNA + AH2 + O2 = 5-hydroxyuridine(34) in tRNA + A + H2O. Functionally, catalyzes oxygen-dependent 5-hydroxyuridine (ho5U) modification at position 34 in tRNAs. This Xylella fastidiosa (strain 9a5c) protein is tRNA uridine(34) hydroxylase.